The following is a 756-amino-acid chain: Polyribonucleotide nucleotidyltransferase (756 aa).

Residues aspartate 492 and aspartate 498 each contribute to the Mg(2+) site. Residues 559-618 form the KH domain; that stretch reads PQHAEVFVNPDVIRIIIGPGGKNIKAITAATGASIDIEDSGKVSIFAPTYEAMEMAREMV. The S1 motif domain maps to 628–702; sequence GKNYVGKVRK…SRKAVLLEEQ (75 aa). Residues 703–756 are disordered; it reads GVEWNPEDTARPSGPPRDRGDRGDRGGRGDRGGDRRGGDRGGRGGDRGRGGDRR. Residues 718–756 are compositionally biased toward basic and acidic residues; sequence PRDRGDRGDRGGRGDRGGDRRGGDRGGRGGDRGRGGDRR.

Belongs to the polyribonucleotide nucleotidyltransferase family. The cofactor is Mg(2+).

The protein localises to the cytoplasm. It carries out the reaction RNA(n+1) + phosphate = RNA(n) + a ribonucleoside 5'-diphosphate. In terms of biological role, involved in mRNA degradation. Catalyzes the phosphorolysis of single-stranded polyribonucleotides processively in the 3'- to 5'-direction. This Nitratidesulfovibrio vulgaris (strain DSM 19637 / Miyazaki F) (Desulfovibrio vulgaris) protein is Polyribonucleotide nucleotidyltransferase.